The chain runs to 197 residues: Cerebellin-3 (197 aa).

The signal sequence occupies residues Met1–Ala24. The C1q domain occupies Ala59–Leu197. A necessary for interaction with CBLN3, and homotrimerization region spans residues Val64–Leu197. N-linked (GlcNAc...) asparagine glycosylation occurs at Asn82.

As to quaternary structure, heterohexamer; disulfide-linked heterotrimers. Interacts with CBLN1. May also form oligomers with CBLN2 and CBLN4. As to expression, expressed in brain, restricted to the cerebellar cortex. Within the cerebellum, expressed in granule layers (at protein level). Also detected in postsynaptic Purkinje cell spines (at protein level).

The protein resides in the endoplasmic reticulum. The protein localises to the golgi apparatus. It localises to the cis-Golgi network. It is found in the secreted. Its subcellular location is the synapse. Functionally, may be involved in synaptic functions in the CNS. In Mus musculus (Mouse), this protein is Cerebellin-3 (Cbln3).